Here is a 239-residue protein sequence, read N- to C-terminus: Phosphoadenosine 5'-phosphosulfate reductase (239 aa).

Cys-235 serves as the catalytic Nucleophile; cysteine thiosulfonate intermediate.

The protein belongs to the PAPS reductase family. CysH subfamily.

It localises to the cytoplasm. It catalyses the reaction [thioredoxin]-disulfide + sulfite + adenosine 3',5'-bisphosphate + 2 H(+) = [thioredoxin]-dithiol + 3'-phosphoadenylyl sulfate. Its pathway is sulfur metabolism; hydrogen sulfide biosynthesis; sulfite from sulfate: step 3/3. In terms of biological role, catalyzes the formation of sulfite from phosphoadenosine 5'-phosphosulfate (PAPS) using thioredoxin as an electron donor. The sequence is that of Phosphoadenosine 5'-phosphosulfate reductase from Thiocapsa roseopersicina.